The chain runs to 424 residues: Sulfate adenylyltransferase (424 aa).

The protein belongs to the sulfate adenylyltransferase family.

It carries out the reaction sulfate + ATP + H(+) = adenosine 5'-phosphosulfate + diphosphate. Its pathway is sulfur metabolism; hydrogen sulfide biosynthesis; sulfite from sulfate: step 1/3. This Desulfatibacillum aliphaticivorans protein is Sulfate adenylyltransferase.